Consider the following 520-residue polypeptide: Arginine biosynthesis bifunctional protein ArgJ, chloroplastic (520 aa).

Substrate contacts are provided by T264, K290, T301, E388, N515, and T520. T301 functions as the Nucleophile in the catalytic mechanism.

This sequence belongs to the ArgJ family. In terms of assembly, heterodimer of an alpha and a beta chain.

It localises to the plastid. The protein localises to the chloroplast. It carries out the reaction N(2)-acetyl-L-ornithine + L-glutamate = N-acetyl-L-glutamate + L-ornithine. The catalysed reaction is L-glutamate + acetyl-CoA = N-acetyl-L-glutamate + CoA + H(+). The protein operates within amino-acid biosynthesis; L-arginine biosynthesis; L-ornithine and N-acetyl-L-glutamate from L-glutamate and N(2)-acetyl-L-ornithine (cyclic): step 1/1. Its pathway is amino-acid biosynthesis; L-arginine biosynthesis; N(2)-acetyl-L-ornithine from L-glutamate: step 1/4. Its function is as follows. Catalyzes two activities which are involved in the cyclic version of arginine biosynthesis: the synthesis of acetylglutamate from glutamate and acetyl-CoA, and of ornithine by transacetylation between acetylornithine and glutamate. The protein is Arginine biosynthesis bifunctional protein ArgJ, chloroplastic of Physcomitrium patens (Spreading-leaved earth moss).